The primary structure comprises 156 residues: Small ribosomal subunit protein uS7 (156 aa).

It belongs to the universal ribosomal protein uS7 family. In terms of assembly, part of the 30S ribosomal subunit. Contacts proteins S9 and S11.

One of the primary rRNA binding proteins, it binds directly to 16S rRNA where it nucleates assembly of the head domain of the 30S subunit. Is located at the subunit interface close to the decoding center, probably blocks exit of the E-site tRNA. This chain is Small ribosomal subunit protein uS7, found in Picosynechococcus sp. (strain ATCC 27264 / PCC 7002 / PR-6) (Agmenellum quadruplicatum).